Consider the following 440-residue polypeptide: Glutamate--tRNA ligase 1 (440 aa).

The 'HIGH' region motif lies at 7–17 (PSPTGYLHVGN). Positions 238-242 (KISKR) match the 'KMSKS' region motif. Lysine 241 contacts ATP.

Belongs to the class-I aminoacyl-tRNA synthetase family. Glutamate--tRNA ligase type 1 subfamily. Monomer.

Its subcellular location is the cytoplasm. It catalyses the reaction tRNA(Glu) + L-glutamate + ATP = L-glutamyl-tRNA(Glu) + AMP + diphosphate. Catalyzes the attachment of glutamate to tRNA(Glu) in a two-step reaction: glutamate is first activated by ATP to form Glu-AMP and then transferred to the acceptor end of tRNA(Glu). In Wolbachia sp. subsp. Brugia malayi (strain TRS), this protein is Glutamate--tRNA ligase 1.